The following is a 341-amino-acid chain: Elongation factor Ts, mitochondrial 2 (341 aa).

Residues 1 to 17 constitute a mitochondrion transit peptide; sequence MLAARFASRAFPRTRLY.

This sequence belongs to the EF-Ts family.

The protein resides in the mitochondrion. Associates with the EF-Tu.GDP complex and induces the exchange of GDP to GTP. It remains bound to the aminoacyl-tRNA.EF-Tu.GTP complex up to the GTP hydrolysis stage on the ribosome. This is Elongation factor Ts, mitochondrial 2 from Postia placenta (strain ATCC 44394 / Madison 698-R) (Brown rot fungus).